A 2145-amino-acid polypeptide reads, in one-letter code: MPVLKSDNFDPLEEAYEGGTIQNYNDEHHLHKSWANVIPDKRGLYDPDYEHDACGVGFVANKHGEQSHKIVTDARYLLVNMTHRGAVSSDGNGDGAGILLGIPHEFMKREFKLDLDLDIPEMGKYAVGNVFFKKNEKNNKKNLIKCQKIFEDLAASFNLSVLGWRNVPVDSTILGDVALSREPTILQPLLVPLYDEKQPEFNETKFRTQLYLLRKEASLQIGLENWFYVCSLNNTTIVYKGQLTPAQVYNYYPDLTNAHFKSHMALVHSRFSTNTFPSWDRAQPLRWLAHNGEINTLRGNKNWMRSREGVMNSATFKDELDKLYPIIEEGGSDSAALDNVLELLTINGTLSLPEAVMMMVPEAYHKDMDSDLKAWYDWAACLMEPWDGPALLTFTDGRYCGAILDRNGLRPCRYYITSDDRVICASEVGVIPIENSLVVQKGKLKPGDLFLVDTQLGEMVDTKKLKSQISKRQDFKSWLSKVIKLDDLLSKTANLVPKEFISQDSLSLKVQSDPRLLANGYTFEQVTFLLTPMALTGKEALGSMGNDAPLACLNENPVLLYDYFRQLFAQVTNPPIDPIREANVMSLECYVGPQGNLLEMHSSQCDRLLLKSPILHWNEFQALKNIEAAYPSWSVAEIDITFDKSEGLLGYTDTIDKITKLASEAIDDGKKILIITDRKMGANRVSISSLIAISCIHHHLIRNKQRSQVALILETGEAREIHHFCVLLGYGCDGVYPYLAMETLVRMNREGLLRNVNNDNDTLEEGQILENYKHAIDAGILKVMSKMGISTLASYKGAQIFEALGLDNSIVDLCFTGTSSRIRGVTFEYLAQDAFSLHERGYPSRQTISKSVNLPESGEYHFRDGGYKHVNEPTAIASLQDTVRNKNDVSWQLYVKKEMEAIRDCTLRGLLELDFENSVSIPLEQVEPWTEIARRFASGAMSYGSISMEAHSTLAIAMNRLGAKSNCGEGGEDAERSAVQENGDTMRSAIKQVASARFGVTSYYLSDADEIQIKIAQGAKPGEGGELPAHKVSKDIAKTRHSTPNVGLISPPPHHDIYSIEDLKQLIYDLKCANPRAGISVKLVSEVGVGIVASGVAKAKADHILVSGHDGGTGAARWTSVKYAGLPWELGLAETHQTLVLNDLRRNVVVQTDGQLRTGFDIAVAVLLGAESFTLATVPLIAMGCVMLRRCHLNSCAVGIATQDPYLRSKFKGQPEHVINFFYYLIQDLRQIMAKLGFRTIDEMVGHSEKLKKRDDVNAKAINIDLSPILTPAHVIRPGVPTKFTKKQDHKLHTRLDNKLIDEAEVTLDRGLPVNIDASIINTDRALGSTLSYRVSKKFGEDGLPKDTVVVNIEGSAGQSFGAFLASGITFILNGDANDYVGKGLSGGIIVIKPPKDSKFKSDENVIVGNTCFYGATSGTAFISGSAGERFGVRNSGATIVVERIKGNNAFEYMTGGRAIVLSQMESLNAFSGATGGIAYCLTSDYDDFVGKINKDTVELESLCDPVEIAFVKNLIQEHWNYTQSDLAARILGNFNHYLKDFVKVIPTDYKKVLLKEKAEAAKAKAKATSEYLKKFRSNQEVDDEVNTLLIANQKAKEQEKKKSITISNKATLKEPKVVDLEDAVPDSKQLEKNSERIEKTRGFMIHKRRHETHRDPRTRVNDWKEFTNPITKKDAKYQTARCMDCGTPFCLSDTGCPLSNIIPKFNELLFKNQWKLALDKLLETNNFPEFTGRVCPAPCEGACTLGIIEDPVGIKSVERIIIDNAFKEGWIKPCPPSTRTGFTVGVIGSGPAGLACADMLNRAGHTVTVYERSDRCGGLLMYGIPNMKLDKAIVQRRIDLLSAEGIDFVTNTEIGKTISMDELKNKHNAVVYAIGSTIPRDLPIKGRELKNIDFAMQLLESNTKALLNKDLEIIREKIQGKKVIVVGGGDTGNDCLGTSVRHGAASVLNFELLPEPPVERAKDNPWPQWPRVMRVDYGHAEVKEHYGRDPREYCILSKEFIGNDEGEVTAIRTVRVEWKKSQSGVWQMVEIPNSEEIFEADIILLSMGFVGPELINGNDNEVKKTRRGTIATLDDSSYSIDGGKTFACGDCRRGQSLIVWAIQEGRKCAASVDKFLMDGTTYLPSNGGIVQRDYKLLKELASQV.

The propeptide occupies methionine 1–alanine 53. Catalysis depends on cysteine 54, which acts as the For GATase activity. A Glutamine amidotransferase type-2 domain is found at cysteine 54–glutamine 455. Leucine 1132–arginine 1189 serves as a coordination point for FMN. [3Fe-4S] cluster-binding residues include cysteine 1185, cysteine 1191, and cysteine 1196. A coiled-coil region spans residues lysine 1551–glutamate 1600. Position 1928-1942 (glycine 1928–arginine 1942) interacts with NAD(+). Threonine 2070 carries the phosphothreonine modification.

The protein belongs to the glutamate synthase family. As to quaternary structure, homotrimer. [3Fe-4S] cluster is required as a cofactor. Requires FAD as cofactor. FMN serves as cofactor.

The enzyme catalyses 2 L-glutamate + NAD(+) = L-glutamine + 2-oxoglutarate + NADH + H(+). Its pathway is amino-acid biosynthesis; L-glutamate biosynthesis via GLT pathway; L-glutamate from 2-oxoglutarate and L-glutamine (NAD(+) route): step 1/1. The protein operates within energy metabolism; nitrogen metabolism. Inhibited by homocysteine sulfonamide. Forms L-glutamate from L-glutamine and 2-oxoglutarate. Represents an alternative pathway to L-glutamate dehydrogenase for the biosynthesis of L-glutamate. Participates with glutamine synthetase in ammonia assimilation processes. The enzyme is specific for NADH, L-glutamine and 2-oxoglutarate. This chain is Glutamate synthase [NADH] (GLT1), found in Saccharomyces cerevisiae (strain ATCC 204508 / S288c) (Baker's yeast).